We begin with the raw amino-acid sequence, 631 residues long: Phosphomethylpyrimidine synthase (631 aa).

Residues Asn239, Met268, Tyr297, His333, 353 to 355, 394 to 397, and Glu433 contribute to the substrate site; these read SRG and DGLR. His437 is a binding site for Zn(2+). Tyr460 lines the substrate pocket. Zn(2+) is bound at residue His501. The [4Fe-4S] cluster site is built by Cys581, Cys584, and Cys589.

The protein belongs to the ThiC family. As to quaternary structure, homodimer. The cofactor is [4Fe-4S] cluster.

It catalyses the reaction 5-amino-1-(5-phospho-beta-D-ribosyl)imidazole + S-adenosyl-L-methionine = 4-amino-2-methyl-5-(phosphooxymethyl)pyrimidine + CO + 5'-deoxyadenosine + formate + L-methionine + 3 H(+). It functions in the pathway cofactor biosynthesis; thiamine diphosphate biosynthesis. Its function is as follows. Catalyzes the synthesis of the hydroxymethylpyrimidine phosphate (HMP-P) moiety of thiamine from aminoimidazole ribotide (AIR) in a radical S-adenosyl-L-methionine (SAM)-dependent reaction. This Shigella sonnei (strain Ss046) protein is Phosphomethylpyrimidine synthase.